The chain runs to 240 residues: E3 ubiquitin-protein ligase LubX (240 aa).

U-box domains follow at residues 30-103 (TTPT…QTNY) and 125-198 (EIPD…RKRE).

Post-translationally, ubiquitinated in the presence of host E1 ubiquitin-activating enzyme, E2 ubiquitin-conjugating enzyme and ubiquitin.

The protein resides in the secreted. The protein localises to the host cell. It catalyses the reaction S-ubiquitinyl-[E2 ubiquitin-conjugating enzyme]-L-cysteine + [acceptor protein]-L-lysine = [E2 ubiquitin-conjugating enzyme]-L-cysteine + N(6)-ubiquitinyl-[acceptor protein]-L-lysine.. Its function is as follows. Effector proteins function to alter host cell physiology and promote bacterial survival in host tissues. This protein is an E3 ubiquitin ligase that interferes with host's ubiquitination pathway. The protein is E3 ubiquitin-protein ligase LubX (lubX) of Legionella pneumophila (strain Paris).